The chain runs to 792 residues: Terminal nucleotidyltransferase 4A (792 aa).

The disordered stretch occupies residues 55–191 (GAAGRGSGGL…QFHPGRRKRE (137 aa)). Composition is skewed to low complexity over residues 80-97 (APAA…PAAE) and 105-139 (SPSL…ASLG). Residues D297 and D299 each coordinate Mg(2+). Residues G360, K385, S403, and Y404 each coordinate ATP. Positions 428–486 (NLGMLLVEFFELYGRNFNYLKTGIRIKEGGAYIAKEEIMKAMTSGYRPSMLCIEDPLLP) constitute a PAP-associated domain. ATP contacts are provided by N488 and R492. The span at 601–619 (QLLSSGSSASSVSSLSGSD) shows a compositional bias: low complexity. Disordered regions lie at residues 601-632 (QLLS…TPSV) and 737-792 (MKGS…SLSR). Over residues 744 to 756 (TQGGGYSSVGSGG) the composition is skewed to gly residues. Residues 764-781 (RGHHQYNRTGWRRKKHTH) show a composition bias toward basic residues.

This sequence belongs to the DNA polymerase type-B-like family. As to quaternary structure, component of a nuclear TRAMP-like complex, an ATP-dependent exosome regulatory complex consisting of a helicase (MTREX), an oligadenylate polymerase (TENT4B or TENT4A), and a substrate specific RNA-binding factor (ZCCHC7 or ZCCHC8). Several TRAMP-like complexes exist with specific compositions and are associated with nuclear, or nucleolar RNA exosomes. Requires Mg(2+) as cofactor. Mn(2+) is required as a cofactor.

It localises to the cytoplasm. The protein resides in the nucleus. It is found in the nucleoplasm. It catalyses the reaction RNA(n) + ATP = RNA(n)-3'-adenine ribonucleotide + diphosphate. Its function is as follows. Terminal nucleotidyltransferase that catalyzes preferentially the transfer of ATP and GTP on RNA 3' poly(A) tail creating a heterogeneous 3' poly(A) tail leading to mRNAs stabilization by protecting mRNAs from active deadenylation. Also functions as a catalytic subunit of a TRAMP-like complex which has a poly(A) RNA polymerase activity and is involved in a post-transcriptional quality control mechanism. Polyadenylation with short oligo(A) tails is required for the degradative activity of the exosome on several of its nuclear RNA substrates. Has no terminal uridylyltransferase activity, and does not play a role in replication-dependent histone mRNA degradation via uridylation. The sequence is that of Terminal nucleotidyltransferase 4A from Homo sapiens (Human).